We begin with the raw amino-acid sequence, 219 residues long: Elongation factor Ts (219 aa).

The segment at 82–85 (TDFV) is involved in Mg(2+) ion dislocation from EF-Tu.

The protein belongs to the EF-Ts family.

The protein localises to the cytoplasm. In terms of biological role, associates with the EF-Tu.GDP complex and induces the exchange of GDP to GTP. It remains bound to the aminoacyl-tRNA.EF-Tu.GTP complex up to the GTP hydrolysis stage on the ribosome. In Synechococcus sp. (strain CC9902), this protein is Elongation factor Ts.